Consider the following 725-residue polypeptide: MKNLVLQNLKSNKAYSFLEIARINKINPNFNSQLSKALFSLLDQGLIVKNNDGNFIKVNEIKKIQGIFKQSNRNFAFIETADEQSYFVAKAHFNGAINSFEVEAIVYESPFEKDKKYAVVKKILKNTHPEIIGFIKISNGIKYFNAFEESFRSYKFFVDQNIDVEEDDVILVVVEKIVDQKIYVNFVKKVSTLKSNFYQIDIVLEKSKTIIDFPEDVLDESALIEDHVIEKDYQNRKDLRDKLIITIDGEDTKDFDDAIYVEKNKDHFLLSVHIADVAHYVKENSAIDKEALRRATSIYLPHMVIPMLPEKLSNGICSLNPGVDRLVMSIDIFIDFQGNTIKTELYEGIINSKHRLTYNQVNDFYNNKIKLDPNLEKMLNDSLELSKILENYKKDEGYINLEIEESKVILDKEGKTVGIKVIQRGLSEVLIENFMVRANEAVAWKMNKLKLPSIYRVHDNPSIESLVLFEKTLKTLGIDFDTPKITSPKAFSDSFEKIKQNYQIDNFVKLMVLRTMEKAIYSDKNIGHFGLASSYYSHFTSPIRRYPDLQLHRLIKQMVFDKSNLKEKKNHFSLILSDVSVQSSKKEVEAVSIERQINDIKKAEYYESKIGKSLKAQIVSILSFGMFVEFEDKVSGLIHISNLLGEDFQVSEDGLLISSNKTKYKLGQEIDVVVVKVDKNLGKVDVVLEKDYQEYLKKEQAFQAFKKNKFTQDKEKQNGKINYKK.

An RNB domain is found at 236–559 (RKDLRDKLII…QLHRLIKQMV (324 aa)). Positions 611 to 689 (GKSLKAQIVS…NLGKVDVVLE (79 aa)) constitute an S1 motif domain.

Belongs to the RNR ribonuclease family. RNase R subfamily.

The protein resides in the cytoplasm. The enzyme catalyses Exonucleolytic cleavage in the 3'- to 5'-direction to yield nucleoside 5'-phosphates.. Functionally, 3'-5' exoribonuclease that releases 5'-nucleoside monophosphates and is involved in maturation of structured RNAs. This chain is Ribonuclease R, found in Mycoplasmopsis pulmonis (strain UAB CTIP) (Mycoplasma pulmonis).